Consider the following 357-residue polypeptide: S-adenosylmethionine:tRNA ribosyltransferase-isomerase (357 aa).

It belongs to the QueA family. In terms of assembly, monomer.

It localises to the cytoplasm. It carries out the reaction 7-aminomethyl-7-carbaguanosine(34) in tRNA + S-adenosyl-L-methionine = epoxyqueuosine(34) in tRNA + adenine + L-methionine + 2 H(+). Its pathway is tRNA modification; tRNA-queuosine biosynthesis. Its function is as follows. Transfers and isomerizes the ribose moiety from AdoMet to the 7-aminomethyl group of 7-deazaguanine (preQ1-tRNA) to give epoxyqueuosine (oQ-tRNA). This is S-adenosylmethionine:tRNA ribosyltransferase-isomerase from Buchnera aphidicola subsp. Schizaphis graminum (strain Sg).